The following is a 501-amino-acid chain: 2,3-bisphosphoglycerate-independent phosphoglycerate mutase (501 aa).

Residues Asp-12 and Ser-62 each coordinate Mn(2+). Ser-62 serves as the catalytic Phosphoserine intermediate. Residues His-121, 150-151 (RD), Arg-182, Arg-188, 253-256 (RSDR), and Lys-322 each bind substrate. Residues Asp-389, His-393, Asp-430, His-431, and His-449 each coordinate Mn(2+).

It belongs to the BPG-independent phosphoglycerate mutase family. As to quaternary structure, monomer. Requires Mn(2+) as cofactor.

The catalysed reaction is (2R)-2-phosphoglycerate = (2R)-3-phosphoglycerate. It participates in carbohydrate degradation; glycolysis; pyruvate from D-glyceraldehyde 3-phosphate: step 3/5. Catalyzes the interconversion of 2-phosphoglycerate and 3-phosphoglycerate. This is 2,3-bisphosphoglycerate-independent phosphoglycerate mutase from Ehrlichia ruminantium (strain Welgevonden).